The primary structure comprises 932 residues: MAALQKLPHCRKLFLLCFLLATLWEARAGQIRYSVREEIDRGSFVGNIAKDLGLEPLALAEQGVRIVSRGRSQLFALNPRSGSLVTANRIDREELCAQSAPCLLNFNILLEDKLTIYSVEVEITDINDNAPRFGVEELELKISETTTPGFRIPLKNAHDADVGENALQKYALNPNDHFSLDVRSGADGNKYPELVLERALDREEEAVHHLVLVASDGGDPVLSGTSRICVKVLDANDNAPVFTQPEYRISIPENTPVGTRILTVTATDADEGYYAQVVYFLEKSPGETSEVFELKSTSGELTIIKDLDYEDATFHEIDIEAQDGPGLLTRAKVIVTVLDVNDNAPEFYMTSATSSVSEDSLPGTIIGLFNVHDRDSGQNAFTTCSLPENLPFKLEKSVDNYYRLVTTRALDREQFSFYNITLTAKDGGNPSLSTDAHILLQVADINDNAPAFSRTSYSTYIPENNPRGASVFSVTAHDPDSNDNAHVTYSFVEDTVQGAPLSSYISINSDTGVLYALRSFDYEQLRDLQVWVIARDSGNPPLSSNVSLSLFVLDQNDNPPEILYPAFPTDGSTGVELAPRSAEPGYLVTKVVAVDRDSGQNAWLSYHLLKASEPGLFSVGLHTGEVRTARALLDRDALKQSLVVAVQDHGQPPLSATVTLTVAVADRIPDILADLGSLEPSAKPNDSDLTLYLVVAVAAVSCVFLAFVIVLLAHRLRRWHKSRLLQASGGSLTGMQSSHFVGVDGVRAFLQTYSHEVSLTADSRKSHLIFPQPNYADTLISQESCEKKDFLSAPQSLLEEEREETFSQQAPPNTDWRFSQAQRPGTSGSQNGDDTGTWPNNQFDTEMLQAMILASASEAADGSSTLGGGAGTMGLSARYGPQFTLQHVPDYRQNVYIPGSNATLTNAAGKRDGKAPAGGNGNKKKSGKKEKK.

Positions 1 to 28 (MAALQKLPHCRKLFLLCFLLATLWEARA) are cleaved as a signal peptide. 6 Cadherin domains span residues 29 to 133 (GQIR…APRF), 134 to 242 (GVEE…APVF), 243 to 347 (TQPE…APEF), 348 to 452 (YMTS…APAF), 453 to 562 (SRTS…PPEI), and 570 to 682 (DGST…EPSA). Residues 29 to 692 (GQIRYSVREE…KPNDSDLTLY (664 aa)) lie on the Extracellular side of the membrane. Residues N419 and N545 are each glycosylated (N-linked (GlcNAc...) asparagine). A glycan (N-linked (GlcNAc...) asparagine) is linked at N685. A helical membrane pass occupies residues 693–713 (LVVAVAAVSCVFLAFVIVLLA). Topologically, residues 714–932 (HRLRRWHKSR…KKKSGKKEKK (219 aa)) are cytoplasmic. 2 disordered regions span residues 798–841 (LEEE…WPNN) and 902–932 (ATLT…KEKK). Positions 806–841 (FSQQAPPNTDWRFSQAQRPGTSGSQNGDDTGTWPNN) are enriched in polar residues. The segment covering 922-932 (NKKKSGKKEKK) has biased composition (basic residues).

The protein resides in the cell membrane. Its function is as follows. Potential calcium-dependent cell-adhesion protein. May be involved in the establishment and maintenance of specific neuronal connections in the brain. This is Protocadherin gamma-A2 (PCDHGA2) from Pan troglodytes (Chimpanzee).